Here is a 154-residue protein sequence, read N- to C-terminus: Small ribosomal subunit protein uS19B (154 aa).

The residue at position 63 (S63) is a Phosphoserine.

It belongs to the universal ribosomal protein uS19 family. In terms of assembly, component of the small ribosomal subunit (SSU). Mature yeast ribosomes consist of a small (40S) and a large (60S) subunit. The 40S small subunit contains 1 molecule of ribosomal RNA (18S rRNA) and at least 33 different proteins. The large 60S subunit contains 3 rRNA molecules (25S, 5.8S and 5S rRNA) and at least 46 different proteins.

It is found in the cytoplasm. The protein localises to the nucleus. Its subcellular location is the nucleolus. Its function is as follows. Component of the ribosome, a large ribonucleoprotein complex responsible for the synthesis of proteins in the cell. The small ribosomal subunit (SSU) binds messenger RNAs (mRNAs) and translates the encoded message by selecting cognate aminoacyl-transfer RNA (tRNA) molecules. The large subunit (LSU) contains the ribosomal catalytic site termed the peptidyl transferase center (PTC), which catalyzes the formation of peptide bonds, thereby polymerizing the amino acids delivered by tRNAs into a polypeptide chain. The nascent polypeptides leave the ribosome through a tunnel in the LSU and interact with protein factors that function in enzymatic processing, targeting, and the membrane insertion of nascent chains at the exit of the ribosomal tunnel. uS19 is involved in the nuclear export of the small ribosomal subunit precursor. Has a role in the late stage of the assembly of pre-40S particles within the nucleus and controls their export to the cytoplasm. In Schizosaccharomyces pombe (strain 972 / ATCC 24843) (Fission yeast), this protein is Small ribosomal subunit protein uS19B (rps1502).